We begin with the raw amino-acid sequence, 81 residues long: U-megalopygitoxin(3)-Mo4 (81 aa).

The first 20 residues, 1–20 (MNSKFVLIVVFLAVVSICFA), serve as a signal peptide directing secretion.

Belongs to the caterpillar 3 family. Post-translationally, contains 3 disulfide bonds. In terms of tissue distribution, expressed by the venom apparatus.

The protein localises to the secreted. Probable toxin. The protein is U-megalopygitoxin(3)-Mo4 of Megalopyge opercularis (Southern flannel moth).